We begin with the raw amino-acid sequence, 172 residues long: Translationally-controlled tumor protein (172 aa).

In terms of domain architecture, TCTP spans 1-172 (MIIYRDLISH…FKDGLEMEKC (172 aa)). Phosphoserine occurs at positions 46 and 53. Serine 64 is modified (phosphoserine; by PLK1). A required for reduction of TSC22D1 protein stability region spans residues 70-172 (VDIVMNHHLQ…FKDGLEMEKC (103 aa)).

It belongs to the TCTP family. As to quaternary structure, homodimer. Interacts with STEAP3. Interacts with TSC22D1; interaction results in the destabilization of TSC22D1 protein.

The protein resides in the cytoplasm. Its function is as follows. Involved in calcium binding and microtubule stabilization. Acts as a negative regulator of TSC22D1-mediated apoptosis, via interaction with and destabilization of TSC22D1 protein. This is Translationally-controlled tumor protein (Tpt1) from Mus musculus (Mouse).